We begin with the raw amino-acid sequence, 110 residues long: U1-lycotoxin-Ls1hh (110 aa).

An N-terminal signal peptide occupies residues 1–20; the sequence is MKFVLLFGVLLVTLFSYSSA. Positions 21 to 44 are excised as a propeptide; the sequence is EMLDDFDQADEDELLSLIEKEEAR. Intrachain disulfides connect C47–C62, C54–C71, C61–C89, and C73–C87.

It belongs to the neurotoxin 19 (CSTX) family. 03 subfamily. As to expression, expressed by the venom gland.

It localises to the secreted. The sequence is that of U1-lycotoxin-Ls1hh from Lycosa singoriensis (Wolf spider).